A 72-amino-acid polypeptide reads, in one-letter code: UPF0495 protein KLLA0D04334g (72 aa).

A helical transmembrane segment spans residues 20–42 (PVELTPLFLAMGVALASGTWFSY).

This sequence belongs to the UPF0495 family.

The protein localises to the membrane. The protein is UPF0495 protein KLLA0D04334g of Kluyveromyces lactis (strain ATCC 8585 / CBS 2359 / DSM 70799 / NBRC 1267 / NRRL Y-1140 / WM37) (Yeast).